Here is a 351-residue protein sequence, read N- to C-terminus: Magnesium-protoporphyrin IX monomethyl ester [oxidative] cyclase 1 (351 aa).

Belongs to the AcsF family. The cofactor is Fe cation.

The catalysed reaction is Mg-protoporphyrin IX 13-monomethyl ester + 3 NADPH + 3 O2 + 2 H(+) = 3,8-divinyl protochlorophyllide a + 3 NADP(+) + 5 H2O. It functions in the pathway porphyrin-containing compound metabolism; chlorophyll biosynthesis (light-independent). In terms of biological role, catalyzes the formation of the isocyclic ring in chlorophyll biosynthesis. Mediates the cyclase reaction, which results in the formation of divinylprotochlorophyllide (Pchlide) characteristic of all chlorophylls from magnesium-protoporphyrin IX 13-monomethyl ester (MgPMME). The protein is Magnesium-protoporphyrin IX monomethyl ester [oxidative] cyclase 1 of Nostoc sp. (strain PCC 7120 / SAG 25.82 / UTEX 2576).